Here is a 340-residue protein sequence, read N- to C-terminus: Glyceraldehyde-3-phosphate dehydrogenase, cytosolic (340 aa).

NAD(+) contacts are provided by residues 16–17, Asp-38, and Arg-85; that span reads RI. Residues 156 to 158, Thr-187, 216 to 217, and Arg-239 contribute to the D-glyceraldehyde 3-phosphate site; these read SCT and TG. The active-site Nucleophile is Cys-157. Asn-321 lines the NAD(+) pocket.

This sequence belongs to the glyceraldehyde-3-phosphate dehydrogenase family. Homotetramer.

Its subcellular location is the cytoplasm. The catalysed reaction is D-glyceraldehyde 3-phosphate + phosphate + NAD(+) = (2R)-3-phospho-glyceroyl phosphate + NADH + H(+). Its pathway is carbohydrate degradation; glycolysis; pyruvate from D-glyceraldehyde 3-phosphate: step 1/5. Key enzyme in glycolysis that catalyzes the first step of the pathway by converting D-glyceraldehyde 3-phosphate (G3P) into 3-phospho-D-glyceroyl phosphate. Essential for the maintenance of cellular ATP levels and carbohydrate metabolism. The polypeptide is Glyceraldehyde-3-phosphate dehydrogenase, cytosolic (GAPC) (Pinus sylvestris (Scotch pine)).